The sequence spans 303 residues: Elongation factor Ts (303 aa).

Positions 80-83 (TDFV) are involved in Mg(2+) ion dislocation from EF-Tu.

This sequence belongs to the EF-Ts family.

The protein localises to the cytoplasm. In terms of biological role, associates with the EF-Tu.GDP complex and induces the exchange of GDP to GTP. It remains bound to the aminoacyl-tRNA.EF-Tu.GTP complex up to the GTP hydrolysis stage on the ribosome. The polypeptide is Elongation factor Ts (Clostridium perfringens (strain ATCC 13124 / DSM 756 / JCM 1290 / NCIMB 6125 / NCTC 8237 / Type A)).